A 110-amino-acid chain; its full sequence is Iron-sulfur cluster assembly protein CyaY (110 aa).

The protein belongs to the frataxin family.

Functionally, involved in iron-sulfur (Fe-S) cluster assembly. May act as a regulator of Fe-S biogenesis. The sequence is that of Iron-sulfur cluster assembly protein CyaY from Pseudomonas putida (strain ATCC 700007 / DSM 6899 / JCM 31910 / BCRC 17059 / LMG 24140 / F1).